We begin with the raw amino-acid sequence, 325 residues long: 6-hydroxymellein 5-farnesyltransferase cdmH (325 aa).

Helical transmembrane passes span 60 to 80 (ASIL…GAAG), 113 to 133 (AFTW…AMLG), 138 to 158 (WPFM…KRPI), 169 to 189 (LLGI…YGPC), and 192 to 212 (ISEI…WSFY). A glycan (N-linked (GlcNAc...) asparagine) is linked at Asn214. 3 consecutive transmembrane segments (helical) span residues 243–263 (ALLA…LRPF), 267–287 (WLWL…LLSF), and 295–315 (GGVL…ACTL).

The protein belongs to the UbiA prenyltransferase family. Requires Mg(2+) as cofactor.

The protein resides in the membrane. The enzyme catalyses 6-hydroxymellein + (2E,6E)-farnesyl diphosphate = verruculide C + diphosphate. Its pathway is secondary metabolite biosynthesis; terpenoid biosynthesis. Its function is as follows. 6-hydroxymellein 5-farnesyltransferase; part of the gene cluster that mediates the biosynthesis of chrodrimanin B, a meroterpenoid that acts as a potent blocker of insect GABA-gated chloride channels. The first step of the pathway is the biosynthesis of 6-hydroxymellein by the polyketide synthase cdmE. The prenyltransferase cdmH acts as a 6-hydroxymellein 5-farnesyltransferase and produces the hydrophobic metabolite verruculide C. The FAD-dependent monooxygenase cdmI further converts verruculide C into verruculide B. The terpene cyclase cdmG then produced the pentacyclic molecule 3-hydroxypentacecilide A, the backbone structure of chrodrimanin B, via folding the farnesyl moiety of the substrate into the chair-boat conformation. The short-chain dehydrogenase/reductase cdmF functions as the 3-OH dehydrogenase that oxidizes the C-3 hydroxyl group of 3-hydroxypentacecilide A and produces chrodrimanin C, the dehydrogenated product of 3-hydroxypentacecilide A. The cytochrome P450 monooxygenase cdmJ then accepts both 3-hydroxypentacecilide A and chrodrimanin C and functions as a C-7-beta-hydroxylase to produce respectively chrodrimanin H and chrodrimanin F. The dioxygenase cdmA accepts chrodrimanin H to afford chrodrimanin E, which is further transformed to chrodrimanin A by the dioxygenase cdmD. CdmA can also accept chrodrimanin C as substrate to convert it into verruculide A, which is further converted into chrodrimanin T by cdmD. The last step of the biosynthesis is proposed to be performed by the acetyltransferase cdmC which acetylates chrodrimanin A to yield chrodrimanin B. The pathway may also lead to the production of additional shunt products, including chrodrimanins T and U. The polypeptide is 6-hydroxymellein 5-farnesyltransferase cdmH (Talaromyces verruculosus (Penicillium verruculosum)).